The chain runs to 261 residues: Gap junction beta-6 protein (261 aa).

The Cytoplasmic segment spans residues 1–22 (MDWGTLHTVIGGVNKHSTSIGK). A helical transmembrane segment spans residues 23 to 45 (VWITVIFIFRVMILVVAAQEVWG). At 46-75 (DEQEDFVCNTLQPGCKNVCYDHFFPVSHIR) the chain is on the extracellular side. Residues 76 to 98 (LWALQLIFVSTPALLVAMHVAYY) form a helical membrane-spanning segment. Over 99–131 (RHETARKFIRGEKRNEFKDLEDIKRQKVRIEGS) the chain is Cytoplasmic. The chain crosses the membrane as a helical span at residues 132 to 154 (LWWTYTSSIFFRIIFEAAFMYVF). The Extracellular portion of the chain corresponds to 155–192 (YFLYNGYHLPWVLKCGIDPCPNLVDCFISRPTEKTVFT). A helical membrane pass occupies residues 193–215 (VFMISASVICMLLNVAELCYLLL). Over 216–261 (KLCFRRSKRTQAQRNHPNHALKESKQNEMNELISDSGQNAITSFPS) the chain is Cytoplasmic.

Belongs to the connexin family. Beta-type (group I) subfamily. In terms of assembly, a connexon is composed of a hexamer of connexins. Interacts with CNST. Highly expressed in adult brain and skin. Less in uterus, lung and eye. Very low in testis and sciatic nerve. No expression before birth.

It is found in the cell membrane. The protein resides in the cell junction. Its subcellular location is the gap junction. Its function is as follows. One gap junction consists of a cluster of closely packed pairs of transmembrane channels, the connexons, through which materials of low MW diffuse from one cell to a neighboring cell. In Mus musculus (Mouse), this protein is Gap junction beta-6 protein (Gjb6).